Reading from the N-terminus, the 418-residue chain is Serine hydroxymethyltransferase (418 aa).

Residues leucine 121 and 125 to 127 (GHL) contribute to the (6S)-5,6,7,8-tetrahydrofolate site. Lysine 230 bears the N6-(pyridoxal phosphate)lysine mark. 355–357 (SPF) contacts (6S)-5,6,7,8-tetrahydrofolate.

It belongs to the SHMT family. As to quaternary structure, homodimer. Requires pyridoxal 5'-phosphate as cofactor.

The protein resides in the cytoplasm. The catalysed reaction is (6R)-5,10-methylene-5,6,7,8-tetrahydrofolate + glycine + H2O = (6S)-5,6,7,8-tetrahydrofolate + L-serine. It participates in one-carbon metabolism; tetrahydrofolate interconversion. Its pathway is amino-acid biosynthesis; glycine biosynthesis; glycine from L-serine: step 1/1. Functionally, catalyzes the reversible interconversion of serine and glycine with tetrahydrofolate (THF) serving as the one-carbon carrier. This reaction serves as the major source of one-carbon groups required for the biosynthesis of purines, thymidylate, methionine, and other important biomolecules. Also exhibits THF-independent aldolase activity toward beta-hydroxyamino acids, producing glycine and aldehydes, via a retro-aldol mechanism. The chain is Serine hydroxymethyltransferase from Methylococcus capsulatus (strain ATCC 33009 / NCIMB 11132 / Bath).